Consider the following 331-residue polypeptide: 6-phosphogluconolactonase (331 aa).

The residue at position 287 (K287) is an N6-acetyllysine.

This sequence belongs to the cycloisomerase 2 family.

It catalyses the reaction 6-phospho-D-glucono-1,5-lactone + H2O = 6-phospho-D-gluconate + H(+). The protein operates within carbohydrate degradation; pentose phosphate pathway; D-ribulose 5-phosphate from D-glucose 6-phosphate (oxidative stage): step 2/3. Its function is as follows. Catalyzes the hydrolysis of 6-phosphogluconolactone to 6-phosphogluconate. This is 6-phosphogluconolactonase from Escherichia coli O127:H6 (strain E2348/69 / EPEC).